A 284-amino-acid chain; its full sequence is Xyloglucan endotransglucosylase/hydrolase protein 22 (284 aa).

Positions 1–21 (MAITYLLPLFLSLIITSSVSA) are cleaved as a signal peptide. Residues 22-211 (NFQRDVEITW…WSKAPFTASY (190 aa)) enclose the GH16 domain. The active-site Nucleophile is the Glu97. Glu101 functions as the Proton donor in the catalytic mechanism. Residue Glu101 participates in xyloglucan binding. A glycan (N-linked (GlcNAc...) asparagine) is linked at Asn105. Residues 114–116 (HTN), 124–126 (DKE), 190–191 (DW), and Gly195 contribute to the xyloglucan site. Residues Cys219 and Cys228 are joined by a disulfide bond. N-linked (GlcNAc...) asparagine glycosylation is present at Asn230. A disulfide bridge links Cys267 with Cys281. Arg272 provides a ligand contact to xyloglucan.

It belongs to the glycosyl hydrolase 16 family. XTH group 2 subfamily. Contains at least one intrachain disulfide bond essential for its enzymatic activity. In terms of processing, N-glycosylated; essential for its enzymatic activity. In terms of tissue distribution, highly expressed. Predominantly expressed in green siliques. Expressed in young expanding leaves, trichomes, lateral root primordia, vascular tissue, abscission zones and elongating hypocols. Following wind stimulation, it decreases in the leaves of wind-stimulated plants, while it strongly increases in sites around cells of the pith parenchyma, between the vascular elements, and within the epidermis.

The protein localises to the secreted. It is found in the cell wall. The protein resides in the extracellular space. Its subcellular location is the apoplast. It catalyses the reaction breaks a beta-(1-&gt;4) bond in the backbone of a xyloglucan and transfers the xyloglucanyl segment on to O-4 of the non-reducing terminal glucose residue of an acceptor, which can be a xyloglucan or an oligosaccharide of xyloglucan.. In terms of biological role, catalyzes xyloglucan endohydrolysis (XEH) and/or endotransglycosylation (XET). Cleaves and religates xyloglucan polymers, an essential constituent of the primary cell wall, and thereby participates in cell wall construction of growing tissues. Its induction in case of mechanical stress, suggests that it may contribute in the adaptive changes in morphogenesis by being recruited to alter tissues tensil strength, or flexibility, enabling adaptation to mechanically stressful environments. This Arabidopsis thaliana (Mouse-ear cress) protein is Xyloglucan endotransglucosylase/hydrolase protein 22 (XTH22).